The primary structure comprises 510 residues: Lysine--tRNA ligase (510 aa).

Positions 420 and 427 each coordinate Mg(2+).

Belongs to the class-II aminoacyl-tRNA synthetase family. Homodimer. The cofactor is Mg(2+).

The protein localises to the cytoplasm. It catalyses the reaction tRNA(Lys) + L-lysine + ATP = L-lysyl-tRNA(Lys) + AMP + diphosphate. The protein is Lysine--tRNA ligase of Ralstonia nicotianae (strain ATCC BAA-1114 / GMI1000) (Ralstonia solanacearum).